Reading from the N-terminus, the 1074-residue chain is Isoleucine--tRNA ligase (1074 aa).

The 'HIGH' region motif lies at 50-60 (PYTSGAAHMGT). A 'KMSKS' region motif is present at residues 605-609 (GMSKS). Lysine 608 lines the ATP pocket.

It belongs to the class-I aminoacyl-tRNA synthetase family. IleS type 2 subfamily. In terms of assembly, monomer. It depends on Zn(2+) as a cofactor.

Its subcellular location is the cytoplasm. The catalysed reaction is tRNA(Ile) + L-isoleucine + ATP = L-isoleucyl-tRNA(Ile) + AMP + diphosphate. Functionally, catalyzes the attachment of isoleucine to tRNA(Ile). As IleRS can inadvertently accommodate and process structurally similar amino acids such as valine, to avoid such errors it has two additional distinct tRNA(Ile)-dependent editing activities. One activity is designated as 'pretransfer' editing and involves the hydrolysis of activated Val-AMP. The other activity is designated 'posttransfer' editing and involves deacylation of mischarged Val-tRNA(Ile). The protein is Isoleucine--tRNA ligase of Haloarcula marismortui (strain ATCC 43049 / DSM 3752 / JCM 8966 / VKM B-1809) (Halobacterium marismortui).